The sequence spans 54 residues: MQLSHLLLAFAMIFVMTIIHTPQVQADAMADADADAAINCRRYPRHPKCRGVSA.

The N-terminal stretch at 1–26 is a signal peptide; it reads MQLSHLLLAFAMIFVMTIIHTPQVQA. A propeptide spanning residues 27–36 is cleaved from the precursor; it reads DAMADADADA. Cysteines 40 and 49 form a disulfide.

In terms of tissue distribution, expressed by the venom gland.

Its subcellular location is the secreted. Functionally, venom protein with unknown function. Does not induce paralysis when a high dose is administered by intrathoracic injection into the blowfly Lucilia caesar. This chain is U7-myrmicitoxin-Tb1a, found in Tetramorium bicarinatum (Tramp ant).